The chain runs to 354 residues: Guanine nucleotide-binding protein alpha-12 subunit (354 aa).

Positions 31–354 (QPLKLLLLGS…SLLMNVAEIL (324 aa)) constitute a G-alpha domain. Residues 34–47 (KLLLLGSGECGKST) form a G1 motif region. GTP-binding positions include 39 to 46 (GSGECGKS), 178 to 184 (LRVRVKT), 203 to 207 (DVGGQ), 272 to 275 (NKID), and Ala329. Positions 46 and 184 each coordinate Mg(2+). The segment at 176–184 (DFLRVRVKT) is G2 motif. Positions 199–208 (FKLVDVGGQK) are G3 motif. A G4 motif region spans residues 268–275 (VLFFNKID). The segment at 327–332 (TCALDS) is G5 motif.

This sequence belongs to the G-alpha family. In terms of assembly, g proteins are composed of 3 units; alpha, beta and gamma. The alpha chain contains the guanine nucleotide binding site.

Guanine nucleotide-binding proteins (G proteins) are involved as modulators or transducers in various transmembrane signaling systems. The chain is Guanine nucleotide-binding protein alpha-12 subunit (gpaL) from Dictyostelium discoideum (Social amoeba).